A 269-amino-acid chain; its full sequence is Phosphonoacetaldehyde hydrolase (269 aa).

Residue Asp-10 is the Nucleophile of the active site. 2 residues coordinate Mg(2+): Asp-10 and Ala-12. Residue Lys-52 is the Schiff-base intermediate with substrate of the active site. Asp-186 contacts Mg(2+).

Belongs to the HAD-like hydrolase superfamily. PhnX family. As to quaternary structure, homodimer. Mg(2+) serves as cofactor.

The enzyme catalyses phosphonoacetaldehyde + H2O = acetaldehyde + phosphate + H(+). Involved in phosphonate degradation. This is Phosphonoacetaldehyde hydrolase from Salmonella agona (strain SL483).